The following is a 287-amino-acid chain: Pantothenate synthetase (287 aa).

Position 30–37 (30–37 (MGNLHSGH)) interacts with ATP. The active-site Proton donor is H37. Position 61 (Q61) interacts with (R)-pantoate. Q61 contacts beta-alanine. 149-152 (GEKD) lines the ATP pocket. Residue Q155 coordinates (R)-pantoate. Residues V178 and 186–189 (LSSR) each bind ATP.

This sequence belongs to the pantothenate synthetase family. Homodimer.

It is found in the cytoplasm. The enzyme catalyses (R)-pantoate + beta-alanine + ATP = (R)-pantothenate + AMP + diphosphate + H(+). It functions in the pathway cofactor biosynthesis; (R)-pantothenate biosynthesis; (R)-pantothenate from (R)-pantoate and beta-alanine: step 1/1. Catalyzes the condensation of pantoate with beta-alanine in an ATP-dependent reaction via a pantoyl-adenylate intermediate. The chain is Pantothenate synthetase from Pseudomonas putida (strain ATCC 47054 / DSM 6125 / CFBP 8728 / NCIMB 11950 / KT2440).